The sequence spans 371 residues: Leu/Ile/Val-binding protein homolog 1 (371 aa).

The signal sequence occupies residues 1–23 (MRKTLFSGVALAAVIAFGGSAWA).

Belongs to the leucine-binding protein family.

Functionally, component of an amino-acid transport system. The sequence is that of Leu/Ile/Val-binding protein homolog 1 from Brucella melitensis biotype 1 (strain ATCC 23456 / CCUG 17765 / NCTC 10094 / 16M).